Consider the following 516-residue polypeptide: UvrABC system protein C (516 aa).

The GIY-YIG domain maps to 9-87; that stretch reads HLPGCYLFKD…IKKHWPRYNI (79 aa). Residues 191–226 enclose the UVR domain; sequence GELIESMEKEMKKMAAKQMFEQAMALRDEISALEYL.

Belongs to the UvrC family. In terms of assembly, interacts with UvrB in an incision complex.

The protein localises to the cytoplasm. The UvrABC repair system catalyzes the recognition and processing of DNA lesions. UvrC both incises the 5' and 3' sides of the lesion. The N-terminal half is responsible for the 3' incision and the C-terminal half is responsible for the 5' incision. The polypeptide is UvrABC system protein C (Methanosarcina acetivorans (strain ATCC 35395 / DSM 2834 / JCM 12185 / C2A)).